Reading from the N-terminus, the 548-residue chain is Probable malate:quinone oxidoreductase (548 aa).

A disordered region spans residues 521–548 (DKPQAADSTPKPQLKPKPVQKEVADIAL). Over residues 539–548 (VQKEVADIAL) the composition is skewed to basic and acidic residues.

It belongs to the MQO family. The cofactor is FAD.

It carries out the reaction (S)-malate + a quinone = a quinol + oxaloacetate. The protein operates within carbohydrate metabolism; tricarboxylic acid cycle; oxaloacetate from (S)-malate (quinone route): step 1/1. This Escherichia coli (strain ATCC 8739 / DSM 1576 / NBRC 3972 / NCIMB 8545 / WDCM 00012 / Crooks) protein is Probable malate:quinone oxidoreductase.